The primary structure comprises 136 residues: MTDTTYDNSTELDPRIAARLKRDVKGLVAAVIQQYDTHEVLMVGYMNDEALRRTLTTGRVTFWSRSRQEYWRKGDTSGHVQYVKGVSLDCDGDALLVEVDQVGAACHTGKRSCFLEGGPLPVVEGHRPAEQQNGLS.

D89 provides a ligand contact to Mg(2+). C90 provides a ligand contact to Zn(2+). Residues D91 and D93 each contribute to the Mg(2+) site. Zn(2+) is bound by residues C106 and C113.

The protein belongs to the PRA-CH family. In terms of assembly, homodimer. Mg(2+) is required as a cofactor. It depends on Zn(2+) as a cofactor.

Its subcellular location is the cytoplasm. It carries out the reaction 1-(5-phospho-beta-D-ribosyl)-5'-AMP + H2O = 1-(5-phospho-beta-D-ribosyl)-5-[(5-phospho-beta-D-ribosylamino)methylideneamino]imidazole-4-carboxamide. It functions in the pathway amino-acid biosynthesis; L-histidine biosynthesis; L-histidine from 5-phospho-alpha-D-ribose 1-diphosphate: step 3/9. In terms of biological role, catalyzes the hydrolysis of the adenine ring of phosphoribosyl-AMP. In Bifidobacterium longum subsp. infantis (strain ATCC 15697 / DSM 20088 / JCM 1222 / NCTC 11817 / S12), this protein is Phosphoribosyl-AMP cyclohydrolase.